A 453-amino-acid polypeptide reads, in one-letter code: uncharacterized protein (453 aa).

A TRAM domain is found at leucine 5–asparagine 63. The [4Fe-4S] cluster site is built by cysteine 76, cysteine 82, cysteine 85, and cysteine 162. Residues glutamine 285, tyrosine 314, glutamate 335, and aspartate 383 each contribute to the S-adenosyl-L-methionine site. Residue cysteine 410 is the Nucleophile of the active site.

It belongs to the class I-like SAM-binding methyltransferase superfamily. RNA M5U methyltransferase family.

This is an uncharacterized protein from Listeria innocua serovar 6a (strain ATCC BAA-680 / CLIP 11262).